Consider the following 392-residue polypeptide: Proteasome-activating nucleotidase (392 aa).

The stretch at 19 to 53 (IVRLLEEKIESLTKELEKLRQDLNWYKGELEKLLA) forms a coiled coil. ATP is bound by residues 178-183 (GTGKTL) and Tyr-317. Residues 390-392 (KYV) are docks into pockets in the proteasome alpha-ring to cause gate opening.

It belongs to the AAA ATPase family. In terms of assembly, homohexamer. The hexameric complex has a two-ring architecture resembling a top hat that caps the 20S proteasome core at one or both ends. Upon ATP-binding, the C-terminus of PAN interacts with the alpha-rings of the proteasome core by binding to the intersubunit pockets.

Its subcellular location is the cytoplasm. In terms of biological role, ATPase which is responsible for recognizing, binding, unfolding and translocation of substrate proteins into the archaeal 20S proteasome core particle. Is essential for opening the gate of the 20S proteasome via an interaction with its C-terminus, thereby allowing substrate entry and access to the site of proteolysis. Thus, the C-termini of the proteasomal ATPase function like a 'key in a lock' to induce gate opening and therefore regulate proteolysis. Unfolding activity requires energy from ATP hydrolysis, whereas ATP binding alone promotes ATPase-20S proteasome association which triggers gate opening, and supports translocation of unfolded substrates. The sequence is that of Proteasome-activating nucleotidase from Sulfurisphaera tokodaii (strain DSM 16993 / JCM 10545 / NBRC 100140 / 7) (Sulfolobus tokodaii).